The chain runs to 2282 residues: Cation channel sperm-associated targeting subunit tau (2282 aa).

Residues 1–118 (MELPPPGNRR…RGKGKGTGTR (118 aa)) form a disordered region. 2 stretches are compositionally biased toward polar residues: residues 11 to 41 (VSIN…SLKR) and 50 to 87 (MMSN…NLSS). Over residues 90–109 (YADEEGKPLTDKNKDKDKGR) the composition is skewed to basic and acidic residues. One can recognise a C2 domain in the interval 131 to 266 (QSDEMAIANQ…IQKGCFTEVM (136 aa)). 10 disordered regions span residues 397–416 (MTKR…SSAL), 656–679 (EHED…TWAE), 747–1066 (NKLI…SHDP), 1104–1153 (SAKS…DKQS), 1217–1240 (YTND…TDDR), 1426–1445 (NSLL…DSRS), 1452–1515 (RQNT…SLDK), 1542–1569 (ERRQ…LEKT), 1908–1928 (NQAN…LKKQ), and 2187–2222 (PKKS…EPNK). 5 stretches are compositionally biased toward polar residues: residues 750–760 (ITDSSFNTTKP), 783–792 (SDPSSNTTKP), 800–841 (DPSS…SDLN), 849–858 (IVSTISSDPN), and 953–974 (SARS…TKLS). Positions 1104 to 1123 (SAKSLDSNNSSASSSPTVNS) are enriched in low complexity. The segment covering 1124–1136 (DTTTNAAEPSGTK) has biased composition (polar residues). 2 stretches are compositionally biased toward polar residues: residues 1452-1466 (RQNT…SSVS) and 1473-1482 (DCQSISTQES). Over residues 1484-1493 (YPVRDTKSDS) the composition is skewed to basic and acidic residues. A compositionally biased stretch (acidic residues) spans 1495–1504 (NDTEEMELDS). Basic and acidic residues-rich tracts occupy residues 1542–1555 (ERRQ…ESLI) and 1916–1925 (SPERPSDISL).

Component of the CatSper complex or CatSpermasome composed of the core pore-forming members CATSPER1, CATSPER2, CATSPER3 and CATSPER4 as well as auxiliary members CATSPERB, CATSPERG, CATSPERD, CATSPERE, CATSPERZ, C2CD6/CATSPERT, SLCO6C1, TMEM249, TMEM262 and EFCAB9. HSPA1 may be an additional auxiliary complex member. The core complex members CATSPER1, CATSPER2, CATSPER3 and CATSPER4 form a heterotetrameric channel. The auxiliary CATSPERB, CATSPERG, CATSPERD and CATSPERE subunits form a pavilion-like structure over the pore which stabilizes the complex through interactions with CATSPER4, CATSPER3, CATSPER1 and CATSPER2 respectively. SLCO6C1 interacts with CATSPERE and TMEM262/CATSPERH interacts with CATSPERB, further stabilizing the complex. C2CD6/CATSPERT interacts at least with CATSPERD and is required for targeting the CatSper complex in the flagellar membrane. As to expression, expressed in cauda sperm (at protein level).

It is found in the cell projection. Its subcellular location is the cilium. It localises to the flagellum membrane. Auxiliary component of the CatSper complex, a complex involved in sperm cell hyperactivation. Sperm cell hyperactivation is needed for sperm motility which is essential late in the preparation of sperm for fertilization. Required for CatSper complex targeting and trafficking into the quadrilinear nanodomains. Targets the preassembled CatSper complexes to elongating flagella, where it links the channel-carrying vesicles and motor proteins. The protein is Cation channel sperm-associated targeting subunit tau of Mus musculus (Mouse).